The sequence spans 351 residues: Small ribosomal subunit biogenesis GTPase RsgA (351 aa).

A CP-type G domain is found at 107–277; sequence ENLLQRPDNF…LIDSPGIREF (171 aa). Residues 163–166 and 219–227 contribute to the GTP site; these read NKTD and GQSGVGKSS. Residues Cys-301, Cys-306, His-308, and Cys-314 each coordinate Zn(2+).

Belongs to the TRAFAC class YlqF/YawG GTPase family. RsgA subfamily. In terms of assembly, monomer. Associates with 30S ribosomal subunit, binds 16S rRNA. The cofactor is Zn(2+).

The protein localises to the cytoplasm. Functionally, one of several proteins that assist in the late maturation steps of the functional core of the 30S ribosomal subunit. Helps release RbfA from mature subunits. May play a role in the assembly of ribosomal proteins into the subunit. Circularly permuted GTPase that catalyzes slow GTP hydrolysis, GTPase activity is stimulated by the 30S ribosomal subunit. In Marinobacter nauticus (strain ATCC 700491 / DSM 11845 / VT8) (Marinobacter aquaeolei), this protein is Small ribosomal subunit biogenesis GTPase RsgA.